The following is a 242-amino-acid chain: Probable ABC transporter ATP-binding protein PEB1C (242 aa).

Positions 2 to 236 constitute an ABC transporter domain; sequence IELKNVNKYY…PKTERARLFL (235 aa). 34–41 serves as a coordination point for ATP; the sequence is GPSGSGKS.

It belongs to the ABC transporter superfamily.

Its subcellular location is the cell inner membrane. Most probably involved, with PEB1, in a binding-protein-dependent transport system for an amino acid. Probably responsible for energy coupling to the transport system. The protein is Probable ABC transporter ATP-binding protein PEB1C (peb1C) of Campylobacter jejuni subsp. jejuni serotype O:2 (strain ATCC 700819 / NCTC 11168).